The chain runs to 794 residues: Protein argonaute-4 (794 aa).

Residues 152–271 (PIIEFMCEVL…LPLEVCNIVA (120 aa)) enclose the PAZ domain. Residues 442-753 (LIVVILPGKT…VAFRARYHLV (312 aa)) enclose the Piwi domain. The segment at 758-779 (DSAEGSHVSGQSNGRDPQALAK) is disordered.

It belongs to the argonaute family. Ago subfamily.

It is found in the cytoplasm. It localises to the P-body. Required for RNA-mediated gene silencing (RNAi). Binds to short RNAs such as microRNAs (miRNAs) and represses the translation of mRNAs which are complementary to them. Lacks endonuclease activity and does not appear to cleave target mRNAs. This chain is Protein argonaute-4 (AGO4), found in Gallus gallus (Chicken).